Reading from the N-terminus, the 608-residue chain is Coilin (608 aa).

Residues 134 to 272 form a disordered region; it reads KETGGYESES…RKKAKRQWLR (139 aa). Positions 141-155 are enriched in acidic residues; sequence SESEEDELEEEAEEF. The segment covering 161 to 179 has biased composition (basic residues); the sequence is ASKKRKTSSKNQSTKRKKC. Residues 163–170 carry the Nuclear localization signal 1 motif; that stretch reads KKRKTSSK. Serine 187 carries the phosphoserine modification. Positions 211–228 are enriched in polar residues; sequence DVQSANNDEQNNDSTKPM. Over residues 235 to 245 the composition is skewed to basic and acidic residues; that stretch reads SQQEESKEHND. The Nuclear localization signal 2 motif lies at 253-260; sequence TKKTPSRS. Residues 256-269 show a composition bias toward basic residues; that stretch reads TPSRSARRKKAKRQ. The region spanning 410–510 is the Tudor; atypical domain; that stretch reads YEQLVAYTGS…LLDVRSVKTS (101 aa). Residues 513–585 form a disordered region; that stretch reads DSAEVAKSAL…KKGSSSGGSW (73 aa). Positions 558-585 are enriched in low complexity; that stretch reads EALSAKKAALSQANNGWNKKGSSSGGSW.

The protein belongs to the coilin family. In terms of assembly, homooligomer. Interaction with RNA results in multimerization due to structural alteration in the NOD domain.

Its subcellular location is the nucleus. It is found in the cajal body. Probable component of nuclear coiled bodies, also known as Cajal bodies or CBs, which are involved in the modification and assembly of nucleoplasmic snRNPs. Required for CBs formation. Binds snRNAs and non-specific artificial RNA via the N-terminal part of the NOD domain and via the NLS2 region (212-282) of the IDD domain. The two sites are able to function independently and provide effective RNA-binding in a non-cooperative manner. This chain is Coilin, found in Arabidopsis thaliana (Mouse-ear cress).